The sequence spans 446 residues: Na(+)/H(+) antiporter NhaA (446 aa).

The next 11 helical transmembrane spans lie at 23 to 43 (GGML…SPWG), 73 to 93 (LMTF…GLEI), 109 to 129 (LLPI…YYFM), 138 to 158 (GLAI…SLFG), 167 to 187 (VFLT…IALF), 193 to 213 (SVNY…GNFF), 219 to 239 (WFYI…GIHA), 314 to 334 (MVNY…SLTA), 348 to 368 (VLAG…WLVI), 381 to 401 (WVNL…SLFI), and 419 to 439 (GVIL…QFAL).

This sequence belongs to the NhaA Na(+)/H(+) (TC 2.A.33) antiporter family.

The protein localises to the cell inner membrane. It catalyses the reaction Na(+)(in) + 2 H(+)(out) = Na(+)(out) + 2 H(+)(in). Functionally, na(+)/H(+) antiporter that extrudes sodium in exchange for external protons. This Phocaeicola vulgatus (strain ATCC 8482 / DSM 1447 / JCM 5826 / CCUG 4940 / NBRC 14291 / NCTC 11154) (Bacteroides vulgatus) protein is Na(+)/H(+) antiporter NhaA.